We begin with the raw amino-acid sequence, 124 residues long: UPF0102 protein Msil_0293 (124 aa).

Belongs to the UPF0102 family.

In Methylocella silvestris (strain DSM 15510 / CIP 108128 / LMG 27833 / NCIMB 13906 / BL2), this protein is UPF0102 protein Msil_0293.